A 223-amino-acid chain; its full sequence is Alpha-enolase (223 aa).

Ser8 contributes to the Mg(2+) binding site. The residue at position 12 (Tyr12) is a Phosphotyrosine. Lys25 bears the N6-acetyllysine mark. Substrate is bound at residue Glu39. The residue at position 61 (Lys61) is an N6-acetyllysine. Glu69 serves as the catalytic Proton donor. Lys87 is modified (N6-acetyllysine; alternate). Lys87 is subject to N6-malonyllysine; alternate. The residue at position 87 (Lys87) is an N6-succinyllysine; alternate. Mg(2+)-binding residues include Asp99 and Asp119. Position 119 (Asp119) interacts with substrate. N6-acetyllysine is present on residues Lys133 and Lys141. Lys141 serves as the catalytic Proton acceptor. Substrate is bound by residues 168 to 171 (SHRS) and Lys192. Residues 202 to 223 (YNQILRIEEELGSKSFRNPLAK) form a required for interaction with PLG region. Residue Lys215 is modified to N6-acetyllysine; alternate. Lys215 is subject to N6-malonyllysine; alternate. Lys215 carries the post-translational modification N6-succinyllysine; alternate.

The protein belongs to the enolase family. Mammalian enolase is composed of 3 isozyme subunits, alpha, beta and gamma, which can form homodimers or heterodimers which are cell-type and development-specific. ENO1 interacts with PLG in the neuronal plasma membrane and promotes its activation. The C-terminal lysine is required for this binding. Interacts with ENO4 and PGAM2. Interacts with CMTM6. It depends on Mg(2+) as a cofactor. ISGylated. In terms of processing, lysine 2-hydroxyisobutyrylation (Khib) by p300/EP300 activates the phosphopyruvate hydratase activity.

The protein localises to the cytoplasm. The protein resides in the cell membrane. It catalyses the reaction (2R)-2-phosphoglycerate = phosphoenolpyruvate + H2O. Its pathway is carbohydrate degradation; glycolysis; pyruvate from D-glyceraldehyde 3-phosphate: step 4/5. Its function is as follows. Glycolytic enzyme the catalyzes the conversion of 2-phosphoglycerate to phosphoenolpyruvate. In addition to glycolysis, involved in various processes such as growth control, hypoxia tolerance and allergic responses. May also function in the intravascular and pericellular fibrinolytic system due to its ability to serve as a receptor and activator of plasminogen on the cell surface of several cell-types such as leukocytes and neurons. Stimulates immunoglobulin production. The polypeptide is Alpha-enolase (Mesocricetus auratus (Golden hamster)).